A 454-amino-acid chain; its full sequence is Guanine deaminase (454 aa).

Zn(2+) is bound by residues His82 and His84. Residues His84–Gln87, Arg213–Phe214, His240–Glu243, and Asp330 contribute to the substrate site. Zn(2+) is bound by residues His240 and Asp330. A Phosphoserine modification is found at Ser453.

This sequence belongs to the metallo-dependent hydrolases superfamily. ATZ/TRZ family. As to quaternary structure, homodimer. Zn(2+) serves as cofactor.

The catalysed reaction is guanine + H2O + H(+) = xanthine + NH4(+). It participates in purine metabolism; guanine degradation; xanthine from guanine: step 1/1. Its function is as follows. Catalyzes the hydrolytic deamination of guanine, producing xanthine and ammonia. This is Guanine deaminase from Homo sapiens (Human).